The primary structure comprises 137 residues: ATP synthase epsilon chain (137 aa).

Belongs to the ATPase epsilon chain family. In terms of assembly, F-type ATPases have 2 components, CF(1) - the catalytic core - and CF(0) - the membrane proton channel. CF(1) has five subunits: alpha(3), beta(3), gamma(1), delta(1), epsilon(1). CF(0) has three main subunits: a, b and c.

The protein resides in the cellular thylakoid membrane. Produces ATP from ADP in the presence of a proton gradient across the membrane. This is ATP synthase epsilon chain from Synechococcus sp. (strain JA-2-3B'a(2-13)) (Cyanobacteria bacterium Yellowstone B-Prime).